A 459-amino-acid polypeptide reads, in one-letter code: tRNA modification GTPase MnmE (459 aa).

(6S)-5-formyl-5,6,7,8-tetrahydrofolate is bound by residues R22, E85, and R124. The region spanning 221-380 (GLSTVIVGKP…LEIQIRDLFF (160 aa)) is the TrmE-type G domain. N231 contributes to the K(+) binding site. Residues 231–236 (NVGKSS), 250–256 (TEVAGTT), and 275–278 (DTAG) contribute to the GTP site. S235 is a Mg(2+) binding site. K(+) is bound by residues T250, V252, and T255. T256 provides a ligand contact to Mg(2+). K459 contacts (6S)-5-formyl-5,6,7,8-tetrahydrofolate.

It belongs to the TRAFAC class TrmE-Era-EngA-EngB-Septin-like GTPase superfamily. TrmE GTPase family. In terms of assembly, homodimer. Heterotetramer of two MnmE and two MnmG subunits. Requires K(+) as cofactor.

It is found in the cytoplasm. Functionally, exhibits a very high intrinsic GTPase hydrolysis rate. Involved in the addition of a carboxymethylaminomethyl (cmnm) group at the wobble position (U34) of certain tRNAs, forming tRNA-cmnm(5)s(2)U34. The protein is tRNA modification GTPase MnmE of Staphylococcus aureus (strain USA300 / TCH1516).